The sequence spans 733 residues: Phosphoribosylformylglycinamidine synthase subunit PurL (733 aa).

H42 is an active-site residue. Positions 45 and 84 each coordinate ATP. E86 contacts Mg(2+). Residues 87–90 (SHNH) and R109 each bind substrate. Catalysis depends on H88, which acts as the Proton acceptor. D110 is a binding site for Mg(2+). Position 233 (Q233) interacts with substrate. D261 contacts Mg(2+). 305–307 (ESQ) contacts substrate. The ATP site is built by D489 and G526. Residue N527 coordinates Mg(2+). S529 serves as a coordination point for substrate.

This sequence belongs to the FGAMS family. In terms of assembly, monomer. Part of the FGAM synthase complex composed of 1 PurL, 1 PurQ and 2 PurS subunits.

The protein resides in the cytoplasm. The catalysed reaction is N(2)-formyl-N(1)-(5-phospho-beta-D-ribosyl)glycinamide + L-glutamine + ATP + H2O = 2-formamido-N(1)-(5-O-phospho-beta-D-ribosyl)acetamidine + L-glutamate + ADP + phosphate + H(+). Its pathway is purine metabolism; IMP biosynthesis via de novo pathway; 5-amino-1-(5-phospho-D-ribosyl)imidazole from N(2)-formyl-N(1)-(5-phospho-D-ribosyl)glycinamide: step 1/2. Functionally, part of the phosphoribosylformylglycinamidine synthase complex involved in the purines biosynthetic pathway. Catalyzes the ATP-dependent conversion of formylglycinamide ribonucleotide (FGAR) and glutamine to yield formylglycinamidine ribonucleotide (FGAM) and glutamate. The FGAM synthase complex is composed of three subunits. PurQ produces an ammonia molecule by converting glutamine to glutamate. PurL transfers the ammonia molecule to FGAR to form FGAM in an ATP-dependent manner. PurS interacts with PurQ and PurL and is thought to assist in the transfer of the ammonia molecule from PurQ to PurL. The protein is Phosphoribosylformylglycinamidine synthase subunit PurL of Moorella thermoacetica (strain ATCC 39073 / JCM 9320).